The sequence spans 518 residues: Arp2/3 complex-activating protein rickA (518 aa).

Residues 310 to 518 (SAAQLQSAET…ERNAKQSQQR (209 aa)) are disordered. 2 stretches are compositionally biased toward pro residues: residues 344–354 (TPPPAPPPPMP) and 382–401 (VPPP…PPPV). Residues 418–430 (QPRPAVDTTNLMK) show a composition bias toward polar residues. A WH2 domain is found at 424–441 (DTTNLMKQIQGGFNLKKI). The segment covering 439 to 461 (KKIEYGEDGKPIPKNKEDTKETS) has biased composition (basic and acidic residues). Residues 488–498 (GTDSGWASDVS) show a composition bias toward polar residues.

Homodimer.

Its subcellular location is the cell surface. Functionally, recruits and activates the Arp2/3 complex, which in turn leads to actin polymerization, promoting Rickettsia motility during infection. The protein is Arp2/3 complex-activating protein rickA (rickA) of Rickettsia bellii (strain RML369-C).